Reading from the N-terminus, the 517-residue chain is ATP synthase subunit beta (517 aa).

Composition is skewed to low complexity over residues 1 to 22 (MAKAATPKTTAAAEAKPAAAKA) and 29 to 42 (AKTAAAKSDAAPKA). A disordered region spans residues 1 to 42 (MAKAATPKTTAAAEAKPAAAKAPAKKAPAKTAAAKSDAAPKA). 195 to 202 (GGAGVGKT) contributes to the ATP binding site.

Belongs to the ATPase alpha/beta chains family. In terms of assembly, F-type ATPases have 2 components, CF(1) - the catalytic core - and CF(0) - the membrane proton channel. CF(1) has five subunits: alpha(3), beta(3), gamma(1), delta(1), epsilon(1). CF(0) has three main subunits: a(1), b(2) and c(9-12). The alpha and beta chains form an alternating ring which encloses part of the gamma chain. CF(1) is attached to CF(0) by a central stalk formed by the gamma and epsilon chains, while a peripheral stalk is formed by the delta and b chains.

The protein localises to the cell inner membrane. It carries out the reaction ATP + H2O + 4 H(+)(in) = ADP + phosphate + 5 H(+)(out). In terms of biological role, produces ATP from ADP in the presence of a proton gradient across the membrane. The catalytic sites are hosted primarily by the beta subunits. This is ATP synthase subunit beta from Brucella anthropi (strain ATCC 49188 / DSM 6882 / CCUG 24695 / JCM 21032 / LMG 3331 / NBRC 15819 / NCTC 12168 / Alc 37) (Ochrobactrum anthropi).